Here is an 879-residue protein sequence, read N- to C-terminus: Leucine--tRNA ligase (879 aa).

A 'HIGH' region motif is present at residues 43–53 (PYPSGRIHMGH). Residues 636–640 (KMSKS) carry the 'KMSKS' region motif. An ATP-binding site is contributed by Lys639.

This sequence belongs to the class-I aminoacyl-tRNA synthetase family.

It localises to the cytoplasm. The enzyme catalyses tRNA(Leu) + L-leucine + ATP = L-leucyl-tRNA(Leu) + AMP + diphosphate. This chain is Leucine--tRNA ligase, found in Afipia carboxidovorans (strain ATCC 49405 / DSM 1227 / KCTC 32145 / OM5) (Oligotropha carboxidovorans).